A 475-amino-acid chain; its full sequence is Equilibrative nucleoside transporter 3 (475 aa).

The Cytoplasmic portion of the chain corresponds to 1 to 51; that stretch reads MAFASEDNVYHSSNAVYRAPSNHQEADQEALLGKLLDYPAPGLQRPEDRFN. A Phosphoserine modification is found at Ser-21. The Dileucine internalization motif motif lies at 31-32; the sequence is LL. Residues 52 to 72 form a helical membrane-spanning segment; sequence GAYIIFFCLGIGGLLPWNFFV. At 73–105 the chain is on the extracellular side; that stretch reads TAKEYWAYKLRNCSSPASGEDPEDMDILNYFES. Asn-84 carries an N-linked (GlcNAc...) asparagine glycan. Residues 106–126 form a helical membrane-spanning segment; sequence YLAVASTVPSLLFLVANFLLV. Residues 127–134 lie on the Cytoplasmic side of the membrane; that stretch reads NRVQVHVR. Residues 135–155 form a helical membrane-spanning segment; that stretch reads VLASLSVSLAIFVVMIVLVKV. At 156–162 the chain is on the extracellular side; that stretch reads DTSSWTR. A helical transmembrane segment spans residues 163–183; the sequence is GFFSLTIACMAIISSSSTIFN. Over 184–199 the chain is Cytoplasmic; that stretch reads SSVYGLTGSFPMRNAQ. A helical membrane pass occupies residues 200–220; it reads ALISGGAMGGTVSAVALLVDL. Topologically, residues 221–230 are extracellular; the sequence is AASSDVRDST. The helical transmembrane segment at 231–251 threads the bilayer; the sequence is LAFFLMAAVFLGLCMGLYLLL. Residues 252 to 305 lie on the Cytoplasmic side of the membrane; sequence SQLEYARYYMRPVAPVRVFSGEDNPSQDAPSASSVAPASRVMHTPPLGPILKKT. Residues 306 to 326 traverse the membrane as a helical segment; it reads ASLGFCAVSLYFVTAFIIPAI. At 327 to 340 the chain is on the extracellular side; it reads STNIQSMHKGTGSP. The helical transmembrane segment at 341-361 threads the bilayer; it reads WTSKFFVPLTVFLLFNFADLC. The Cytoplasmic portion of the chain corresponds to 362–377; it reads GRQVTAWIQVPGPRSK. The helical transmembrane segment at 378–398 threads the bilayer; it reads LLPGLVVSRFCLVPLFLLCNY. The Extracellular segment spans residues 399-415; sequence QPRSHLTKVLFQSDIYP. A helical membrane pass occupies residues 416-436; sequence VLFTCLLGLSNGYLSTLVLIY. Residues 437-450 are Cytoplasmic-facing; the sequence is GPKIVPRELAEATS. The chain crosses the membrane as a helical span at residues 451–471; it reads VVMLFYMSVGLMLGSACAALL. The Extracellular segment spans residues 472–475; it reads EHFI.

Belongs to the SLC29A/ENT transporter (TC 2.A.57) family. In terms of tissue distribution, expressed in macrophages.

Its subcellular location is the lysosome membrane. The protein localises to the late endosome membrane. The protein resides in the mitochondrion membrane. It is found in the cell membrane. The enzyme catalyses adenosine(in) = adenosine(out). It carries out the reaction guanosine(in) = guanosine(out). The catalysed reaction is inosine(in) = inosine(out). It catalyses the reaction uridine(out) = uridine(in). The enzyme catalyses cytidine(in) = cytidine(out). It carries out the reaction thymidine(in) = thymidine(out). The catalysed reaction is 2'-deoxyadenosine(in) = 2'-deoxyadenosine(out). It catalyses the reaction 2'-deoxycytidine(in) = 2'-deoxycytidine(out). The enzyme catalyses guanine(out) = guanine(in). It carries out the reaction uracil(in) = uracil(out). The catalysed reaction is (R)-noradrenaline(out) = (R)-noradrenaline(in). It catalyses the reaction dopamine(out) = dopamine(in). The enzyme catalyses serotonin(out) = serotonin(in). It carries out the reaction tyramine(in) = tyramine(out). The catalysed reaction is ATP(in) = ATP(out). In terms of biological role, uniporter that mediates the facilitative transport of nucleoside across lysosomal and mitochondrial membranes. Functions as a non-electrogenic Na(+)-independent transporter. Substrate transport is pH-dependent and enhanced under acidic condition, probably reflecting the location of the transporter in acidic intracellular compartments. Proton is not a cotransporting ion but most likely change the ionization state of the transporter which dictates transport-permissible/impermissible conformation for nucleoside translocation. May direct the nucleoside transport from lysosomes to cytosol or cytosol to mitochondria to facilitate the fundamental function of salvage synthesis of nucleic acids. Involved in the transport of nucleosides (adenosine, guanosine, uridine, thymidine, cytidine and inosine) and deoxynucleosides (deoxyadenosine, deoxycytidine). Also mediates transport of purine nucleobases (adenine, guanine), and pyrimidine nucleobases (uracil). Also able to transport monoamine neurotransmitters dopamine, serotonin, noradrenaline and tyramine. Capable of transporting ATP. Mediates nucleoside export from lysosomes in macrophages, which regulates macrophage functions and numbers. The sequence is that of Equilibrative nucleoside transporter 3 from Mus musculus (Mouse).